Here is a 281-residue protein sequence, read N- to C-terminus: MLLSGSSSQSLAAALAAATGERLGDVTYDSFPDGEQLVTVPPAVDGERAVIVASTPTSDAHIEVLQLQDAARDAGASEIITVLPYMGYARQDDAFDPGQPVSARAVARAISTGTDRVLTVNPHEDGVLECFDVPAAGVDAAPQLAAPLPADLTDPVFLSPDHGATDLATSVRDAYGTGVTDHFQKVRHSGSDVTVEPSEIQTAGRDVVVTDDIVATGTTMSEAITALDDPARVFVATVHPLLAGSARLKLARAGVEAVYGTDTIECAVSEVSAAPAIADAL.

ATP-binding positions include D33 to E35 and R90 to Q91. Mg(2+) contacts are provided by H123 and D161. K185 is a catalytic residue. R187 and D211 together coordinate D-ribose 5-phosphate.

This sequence belongs to the ribose-phosphate pyrophosphokinase family. Class III (archaeal) subfamily. It depends on Mg(2+) as a cofactor.

The protein resides in the cytoplasm. The catalysed reaction is D-ribose 5-phosphate + ATP = 5-phospho-alpha-D-ribose 1-diphosphate + AMP + H(+). It participates in metabolic intermediate biosynthesis; 5-phospho-alpha-D-ribose 1-diphosphate biosynthesis; 5-phospho-alpha-D-ribose 1-diphosphate from D-ribose 5-phosphate (route I): step 1/1. Functionally, involved in the biosynthesis of the central metabolite phospho-alpha-D-ribosyl-1-pyrophosphate (PRPP) via the transfer of pyrophosphoryl group from ATP to 1-hydroxyl of ribose-5-phosphate (Rib-5-P). In Halobacterium salinarum (strain ATCC 29341 / DSM 671 / R1), this protein is Ribose-phosphate pyrophosphokinase.